A 263-amino-acid polypeptide reads, in one-letter code: MTQGAQRLVSMRALLESGAHFGHQTKRWNPKMRPYIFTARNGIHIIDLQKTITGLTEAYQFIVETVAAGNKVLFVGTKKQAQETIAEEATRADQLYVIQRWLGGTLTNFVTIRKRLRYLINLEEQRARGEFNKLTKAEALKRDAEIEKLNKIFGGIKTMDRLPGALFIVDPHKEDLAVKEANKVGIPIVAMVDTNCDPDLIDYVIPCNDDAIRSIRLIAAKIADAAIEGRNRRESLQADVAYSQSHDHAMAERMIAEEAEAVE.

It belongs to the universal ribosomal protein uS2 family.

This is Small ribosomal subunit protein uS2 from Roseiflexus castenholzii (strain DSM 13941 / HLO8).